A 179-amino-acid polypeptide reads, in one-letter code: Large ribosomal subunit protein uL5 (179 aa).

This sequence belongs to the universal ribosomal protein uL5 family. In terms of assembly, part of the 50S ribosomal subunit; part of the 5S rRNA/L5/L18/L25 subcomplex. Contacts the 5S rRNA and the P site tRNA. Forms a bridge to the 30S subunit in the 70S ribosome.

In terms of biological role, this is one of the proteins that bind and probably mediate the attachment of the 5S RNA into the large ribosomal subunit, where it forms part of the central protuberance. In the 70S ribosome it contacts protein S13 of the 30S subunit (bridge B1b), connecting the 2 subunits; this bridge is implicated in subunit movement. Contacts the P site tRNA; the 5S rRNA and some of its associated proteins might help stabilize positioning of ribosome-bound tRNAs. The protein is Large ribosomal subunit protein uL5 of Marinomonas sp. (strain MWYL1).